The sequence spans 905 residues: Tight junction protein ZO-3 (905 aa).

Residues 11–93 (TATLYKDPRR…TANVTVKRPR (83 aa)) form the PDZ 1 domain. A disordered region spans residues 92 to 167 (PRRVQLPATK…GGGSEANGLD (76 aa)). Phosphoserine is present on residues Ser-111 and Ser-128. Residues 124–133 (GDSSSGSGRS) are compositionally biased toward low complexity. The segment covering 139–155 (RRSRAGRRGRVGSHGRR) has biased composition (basic residues). Phosphoserine occurs at positions 156, 157, 161, 195, and 311. The PDZ 2 domain occupies 187-264 (SVLVKRRNSE…ELTLLVLRDS (78 aa)). The disordered stretch occupies residues 289 to 367 (LTSELSQAPP…QSLEDRGYSP (79 aa)). At Thr-317 the chain carries Phosphothreonine. Residues Ser-319, Ser-343, and Ser-359 each carry the phosphoserine modification. The PDZ 3 domain maps to 368–434 (DTRVVSFPKG…LTREEAVQFL (67 aa)). The SH3 domain maps to 464–541 (GDSFYIRTHF…PNQSRAEQLA (78 aa)). The Guanylate kinase-like domain maps to 573–754 (RRGTKKASTQ…WYQEVKAVIQ (182 aa)). Ser-584 carries the phosphoserine modification. Disordered regions lie at residues 773 to 818 (EDLD…PQDV) and 850 to 905 (TDKW…ATDL). The span at 851–877 (DKWETQADSHYTQDQRRQDSMRTYKHE) shows a compositional bias: basic and acidic residues. Phosphoserine is present on residues Ser-891 and Ser-892.

This sequence belongs to the MAGUK family. As to quaternary structure, interacts with occludin OCLN, claudins and TPJ1. Interacts with PATJ. Interacts with UBN1. Interacts with FASLG. Interacts with CCND1. Phosphorylated. Is concentrated in various types of epithelium, in tissues such as the lung, liver and kidney, but not in endothelium or at cadherin-based cell-cell adhesion sites.

It localises to the cell membrane. It is found in the cell junction. Its subcellular location is the tight junction. The protein resides in the nucleus. Its function is as follows. Tjp1, Tjp2, and Tjp3 are closely related scaffolding proteins that link tight junction (TJ) transmembrane proteins such as claudins, junctional adhesion molecules, and occludin to the actin cytoskeleton. The tight junction acts to limit movement of substances through the paracellular space and as a boundary between the compositionally distinct apical and basolateral plasma membrane domains of epithelial and endothelial cells. Binds and recruits PatJ to tight junctions where it connects and stabilizes apical and lateral components of tight junctions. Promotes cell-cycle progression through the sequestration of cyclin D1 (Ccnd1) at tight junctions during mitosis which prevents Ccnd1 degradation during M-phase and enables S-phase transition. With Tjp1 and Tjp2, participates in the junctional retention and stability of the transcription factor DbpA, but is not involved in its shuttling to the nucleus. Contrary to Tjp2, Tjp3 is dispensable for individual viability, embryonic development, epithelial differentiation, and the establishment of TJs, at least in the laboratory environment. This is Tight junction protein ZO-3 (Tjp3) from Mus musculus (Mouse).